The primary structure comprises 187 residues: MAERENRRDRRDDRSREETPEFADRLVAINRVSKTVKGGKRFGFAALVVVGDQRGRVGFGKGKAKEVPEAIRKATEQAKRQMIRVALRDGRTLHHDQEGRHGAGKVVMRAAVPGTGIIAGGPMRAVFEMLGIQDVVAKSMGSQNPYNMIRATMDGLKRESSPRQVAQRRGKKVAEILKKPEAEVAEA.

The tract at residues 1-20 is disordered; sequence MAERENRRDRRDDRSREETP. The region spanning 22–85 is the S5 DRBM domain; sequence FADRLVAINR…EQAKRQMIRV (64 aa). The interval 154–174 is disordered; sequence DGLKRESSPRQVAQRRGKKVA.

The protein belongs to the universal ribosomal protein uS5 family. In terms of assembly, part of the 30S ribosomal subunit. Contacts proteins S4 and S8.

Its function is as follows. With S4 and S12 plays an important role in translational accuracy. In terms of biological role, located at the back of the 30S subunit body where it stabilizes the conformation of the head with respect to the body. This chain is Small ribosomal subunit protein uS5, found in Cereibacter sphaeroides (strain ATCC 17025 / ATH 2.4.3) (Rhodobacter sphaeroides).